We begin with the raw amino-acid sequence, 617 residues long: MKNTDERYSMATCCAGGQSLRSKYGERAPNIQLSDRQWPSKKLTKSPIWLSTDLRDGNQALPNPMTLQQKWRMFQLLVSIGFTQIEVSFPCASQTEFDFTRQLIETPGATPDDVTLEVLSPCREDAIATSVRSLKGAKQAILFLYLATSDNYRETVLQLSEAEWLDQAKRCVEYARSITKDDPENCRTKWSFGFGFEDFANARPEAALRLGETIKTAWGPSKDNPVILGLATSVEATTPNVFADQVEYFSRNITEREKVCISIHTHNDRGGAVASAELACLAGGDRVEGCLFGNGERAGNLDLITCSMNMFTQGIETGLDFSDLLEIRRVYEEVTNLPVHPRQPYSGDFYFRAFAGAHQDAIRKGLAKRGRLAAMPSGLTQMSKGMIINGTSNEKIPSSTWRVPYLPLDPADLGFSFDSVIGVNSQSGKGGIAWLIQQGLGFNIPNELAAHYSQIIKKRSVSLERGLAAEEICDFFLEIYDLKSSYNTQLLKRLHSGFSQTIDMQQELEDATAPANNAAMDISKTMGIDVHCTMASSHVISSHDGEQLSNVAFVQCEIEQTTPCVWGVGVALSREEAVNRSLLLAARRKPGTETPDTKTSVNAIIQPLEVYSFSQKA.

One can recognise a Pyruvate carboxyltransferase domain in the interval 47–325; the sequence is PIWLSTDLRD…ETGLDFSDLL (279 aa).

This sequence belongs to the alpha-IPM synthase/homocitrate synthase family. LeuA type 2 subfamily.

The enzyme catalyses 3-methyl-2-oxobutanoate + acetyl-CoA + H2O = (2S)-2-isopropylmalate + CoA + H(+). The protein operates within mycotoxin biosynthesis. In terms of biological role, 2-isopropylmalate synthase; part of the gene cluster that mediates the biosynthesis of pneumocandins, lipohexapeptides of the echinocandin family that prevent fungal cell wall formation by non-competitive inhibition of beta-1,3-glucan synthase. The 10,12-dimethylmyristoyl side chain is synthesized by the reducing polyketide synthase gloL/GLPKS4. The thioesterase gloN/GLHYD exclusively interacts with gloL/GLPKS4 to maintain turnover of the polyketide side chain. The 10R,12S-dimethylmyristic acid is then transferred to the first thiolation domain of the nonribosomal peptide synthetase gloA/GLNRPS4 by the acyl-AMP ligase gloD/GLligase, followed by its acylation to L-ornithine to trigger elongation of the cyclic hexapeptide. L-ornithine, 4R-hydroxyl-L-proline (generated from L-proline by the dioxygenase gloF/GLOXY2), 3S-hydroxyl-L-homotyrosine (generated by gloG/GLHtyB, gloH/GLHtyA, gloI/GLHtyC, gloJ/GLHtyD and hydroxylated at C-3 by the dioxygenase gloM/GLOXY1), 3R-hydroxyl-L-glutamine (generated from L-glutamine probably by the dioxygenase gloE/GLOXY3) and 3S-hydroxyl-L-proline (generated from L-proline by the dioxygenase gloF/GLOXY2 to yield pneumocandin B0), or 3S-hydroxyl-4S-methyl-L-proline (generated from L-leucine by the dioxygenase gloC/GLOXY4 to yield pneumocandin A0) are sequentially added to the growing chain. The last C domain of gloA/GLNRPS4 is proposed to be responsible for cyclization by condensation to form the peptide bond between L-ornithine and 3S-hydroxyl-4S-methyl-L-proline (for pneumocandin A0) or 3S-hydroxyl-L-proline (for pneumocandin B0). Finally, the subsequent C-4 hydroxylation of 3S-hydroxyl-L-homotyrosine and L-ornithine dihydroxylation at C-4 and C-5 are performed by the cytochrome P450 monooxygenases gloP/GLP450-1 and gloO/GLP450-2, respectively. This Glarea lozoyensis (strain ATCC 20868 / MF5171) protein is Isopropyl malate synthase gloH.